The primary structure comprises 73 residues: Beta-defensin 39 (73 aa).

The signal sequence occupies residues 1 to 23 (MKISCFLLLVLSLSCFQINSVSG). 3 disulfides stabilise this stretch: Cys29–Cys58, Cys36–Cys51, and Cys41–Cys59.

It belongs to the beta-defensin family.

The protein localises to the secreted. Has antibacterial activity. This Rattus norvegicus (Rat) protein is Beta-defensin 39 (Defb39).